Consider the following 29-residue polypeptide: Cytochrome b6-f complex subunit 8 (29 aa).

The helical transmembrane segment at 3–23 threads the bilayer; the sequence is IITFGWVAVAAFFALSIAFVV.

The protein belongs to the PetN family. As to quaternary structure, the 4 large subunits of the cytochrome b6-f complex are cytochrome b6, subunit IV (17 kDa polypeptide, PetD), cytochrome f and the Rieske protein, while the 4 small subunits are PetG, PetL, PetM and PetN. The complex functions as a dimer.

It is found in the cellular thylakoid membrane. Functionally, component of the cytochrome b6-f complex, which mediates electron transfer between photosystem II (PSII) and photosystem I (PSI), cyclic electron flow around PSI, and state transitions. This chain is Cytochrome b6-f complex subunit 8, found in Synechococcus sp. (strain JA-3-3Ab) (Cyanobacteria bacterium Yellowstone A-Prime).